Reading from the N-terminus, the 173-residue chain is Cell division protein SepF (173 aa).

The segment at 17–85 (SDDEYISDET…NELRTITTVH (69 aa)) is disordered. Low complexity predominate over residues 35–52 (SAGGSSAAVSESGSTSVA).

It belongs to the SepF family. Homodimer. Interacts with FtsZ.

It localises to the cytoplasm. Functionally, cell division protein that is part of the divisome complex and is recruited early to the Z-ring. Probably stimulates Z-ring formation, perhaps through the cross-linking of FtsZ protofilaments. Its function overlaps with FtsA. This chain is Cell division protein SepF, found in Kocuria rhizophila (strain ATCC 9341 / DSM 348 / NBRC 103217 / DC2201).